A 138-amino-acid polypeptide reads, in one-letter code: uncharacterized protein (138 aa).

The disordered stretch occupies residues 1-73; it reads MCSAGQLLGG…NHTGEPVGDD (73 aa). Residues 7–18 are compositionally biased toward gly residues; that stretch reads LLGGGGGGGGSG. Residues 19-29 show a composition bias toward basic and acidic residues; the sequence is GERDEDRDALA. Low complexity predominate over residues 30–43; the sequence is ERAAAGTEQESGAS. The chain crosses the membrane as a helical span at residues 106–126; that stretch reads VIVIFFWVMLWFLGLPAFGLV.

The protein belongs to the FAM241 family.

Its subcellular location is the membrane. This is an uncharacterized protein from Bos taurus (Bovine).